An 881-amino-acid chain; its full sequence is Alanine--tRNA ligase (881 aa).

Residues histidine 564, histidine 568, cysteine 673, and histidine 677 each contribute to the Zn(2+) site. The segment at 848–867 (GQGGGGRPDMAQAGGPDGDK) is disordered.

This sequence belongs to the class-II aminoacyl-tRNA synthetase family. It depends on Zn(2+) as a cofactor.

The protein resides in the cytoplasm. It carries out the reaction tRNA(Ala) + L-alanine + ATP = L-alanyl-tRNA(Ala) + AMP + diphosphate. Its function is as follows. Catalyzes the attachment of alanine to tRNA(Ala) in a two-step reaction: alanine is first activated by ATP to form Ala-AMP and then transferred to the acceptor end of tRNA(Ala). Also edits incorrectly charged Ser-tRNA(Ala) and Gly-tRNA(Ala) via its editing domain. The polypeptide is Alanine--tRNA ligase (Hyphomonas neptunium (strain ATCC 15444)).